The chain runs to 62 residues: UPF0434 protein Fphi_1862 (62 aa).

Belongs to the UPF0434 family.

In Francisella philomiragia subsp. philomiragia (strain ATCC 25017 / CCUG 19701 / FSC 153 / O#319-036), this protein is UPF0434 protein Fphi_1862.